The primary structure comprises 725 residues: Homeobox-leucine zipper protein HDG3 (725 aa).

The segment at 1–74 is disordered; it reads MSQSNMVPVA…PRHKKKKYNR (74 aa). Low complexity predominate over residues 11–40; it reads NNGDNNNDNENNNNNNNNGGTDNTNAGNDS. The segment covering 46–64 has biased composition (polar residues); the sequence is DSGNTSSGNHGEGLGNNQA. Over residues 65-74 the composition is skewed to basic residues; sequence PRHKKKKYNR. Positions 68-127 form a DNA-binding region, homeobox; that stretch reads KKKKYNRHTQLQISEMEAFFRECPHPDDKQRYDLSAQLGLDPVQIKFWFQNKRTQNKNQQ. A coiled-coil region spans residues 117–201; sequence QNKRTQNKNQ…SVTAEKISRL (85 aa). The 233-residue stretch at 243-475 folds into the START domain; the sequence is DANTKPIIME…LVRQCERISS (233 aa).

It belongs to the HD-ZIP homeobox family. Class IV subfamily. In terms of assembly, interacts with AIL7/PLT7, ANT, BBM and AIL1. In terms of tissue distribution, expressed in siliques.

The protein localises to the nucleus. Probable transcription factor. Seems to promote cell differentiation. The chain is Homeobox-leucine zipper protein HDG3 from Arabidopsis thaliana (Mouse-ear cress).